The following is a 424-amino-acid chain: Serine/threonine-protein kinase H1 (424 aa).

Gly-2 is lipidated: N-myristoyl glycine. The S-palmitoyl cysteine moiety is linked to residue Cys-3. The tract at residues 56-80 is disordered; the sequence is SQYAHPCPGPPTAGHTEPPSEPPRR. Positions 98 to 355 constitute a Protein kinase domain; the sequence is YDIKALIGRG…ALQALRHPWV (258 aa). ATP-binding positions include 104–112 and Lys-127; that span reads IGRGSFSRV. Asp-218 (proton acceptor) is an active-site residue. A disordered region spans residues 378–407; the sequence is RASSRCQSTKSAQSTRSSRSTRSNKSRRVR. 2 positions are modified to phosphoserine; by autocatalysis: Ser-380 and Ser-381. Residues 385–398 show a composition bias toward low complexity; it reads STKSAQSTRSSRST.

Belongs to the protein kinase superfamily. CAMK Ser/Thr protein kinase family. In terms of assembly, homodimer. In terms of processing, autophosphorylated on serine residues. Myristoylated. Required for membrane association. Prerequisite for palmitoylation to occur. Post-translationally, palmitoylated. As to expression, expressed in all tissues and cell lines tested with the highest level of abundance in testis.

Its subcellular location is the golgi apparatus. It is found in the cytoplasm. The protein resides in the cytoskeleton. The protein localises to the microtubule organizing center. It localises to the centrosome. Its subcellular location is the nucleus speckle. It is found in the endoplasmic reticulum membrane. The protein resides in the cell membrane. It catalyses the reaction L-seryl-[protein] + ATP = O-phospho-L-seryl-[protein] + ADP + H(+). The enzyme catalyses L-threonyl-[protein] + ATP = O-phospho-L-threonyl-[protein] + ADP + H(+). Activity depends on Ca(2+) concentration. Serine/threonine protein kinase that may be involved in the regulation of pre-mRNA processing. It may phosphorylate components of nuclear splice factor compartments (SFC), such as non-snRNP splicing factors containing a serine/arginine-rich domain (SR proteins). Reversible phosphorylation of SR proteins may cause their release into the nucleoplasm and change their local concentration, thereby influencing alternative splicing. The protein is Serine/threonine-protein kinase H1 (PSKH1) of Homo sapiens (Human).